Reading from the N-terminus, the 240-residue chain is FAS1 domain-containing protein AN1527 (240 aa).

Positions 1–24 (MRQLSTTALVLFLFFYCSISTAWS) are cleaved as a signal peptide. The FAS1 domain occupies 91 to 239 (EPTISDVLPK…GEVWVIDGVI (149 aa)).

It localises to the vacuole. This Emericella nidulans (strain FGSC A4 / ATCC 38163 / CBS 112.46 / NRRL 194 / M139) (Aspergillus nidulans) protein is FAS1 domain-containing protein AN1527.